The following is a 279-amino-acid chain: 2-dehydro-3-deoxyphosphooctonate aldolase (279 aa).

It belongs to the KdsA family.

It localises to the cytoplasm. It carries out the reaction D-arabinose 5-phosphate + phosphoenolpyruvate + H2O = 3-deoxy-alpha-D-manno-2-octulosonate-8-phosphate + phosphate. It participates in carbohydrate biosynthesis; 3-deoxy-D-manno-octulosonate biosynthesis; 3-deoxy-D-manno-octulosonate from D-ribulose 5-phosphate: step 2/3. It functions in the pathway bacterial outer membrane biogenesis; lipopolysaccharide biosynthesis. This Desulfosudis oleivorans (strain DSM 6200 / JCM 39069 / Hxd3) (Desulfococcus oleovorans) protein is 2-dehydro-3-deoxyphosphooctonate aldolase.